The following is a 389-amino-acid chain: Acetate kinase (389 aa).

Asn-9 contacts Mg(2+). Lys-16 provides a ligand contact to ATP. Arg-77 is a substrate binding site. Catalysis depends on Asp-134, which acts as the Proton donor/acceptor. ATP-binding positions include His-194–Gly-198, Asp-268–Arg-270, and Gly-316–Asn-320. Mg(2+) is bound at residue Glu-370.

This sequence belongs to the acetokinase family. As to quaternary structure, homodimer. It depends on Mg(2+) as a cofactor. Mn(2+) is required as a cofactor.

It localises to the cytoplasm. The catalysed reaction is acetate + ATP = acetyl phosphate + ADP. It participates in metabolic intermediate biosynthesis; acetyl-CoA biosynthesis; acetyl-CoA from acetate: step 1/2. Its function is as follows. Catalyzes the formation of acetyl phosphate from acetate and ATP. Can also catalyze the reverse reaction. The chain is Acetate kinase from Mycolicibacterium vanbaalenii (strain DSM 7251 / JCM 13017 / BCRC 16820 / KCTC 9966 / NRRL B-24157 / PYR-1) (Mycobacterium vanbaalenii).